Reading from the N-terminus, the 528-residue chain is Na(+)/H(+) antiporter NhaB (528 aa).

The Cytoplasmic portion of the chain corresponds to 1-23 (MPISLGNAFIKNFLGKAPDWYKV). The chain crosses the membrane as a helical span at residues 24–46 (AIIAFLIINPIVFFLINPFVAGW). The Periplasmic portion of the chain corresponds to 47–95 (LLVAEFIFTLAMALKCYPLQPGGLLAIEAIAIGMTSPAQVKHELVANIE). The chain crosses the membrane as a helical span at residues 96–118 (VLLLLVFMVAGIYFMKHLLLFIF). Residues 119-129 (TKILLGIRSKT) are Cytoplasmic-facing. The helical transmembrane segment at 130 to 163 (LLSLAFCFAAAFLSAFLDALTVIAVVISVAIGFY) threads the bilayer. Residues 164 to 239 (SIYHKVASGN…ADQAGWLFGE (76 aa)) are Periplasmic-facing. The chain crosses the membrane as a helical span at residues 240–262 (FLIRMSPVTLPVFFCGLITCALV). At 263–297 (EKLKVFGYGAKLPNNVRQILVDFDNEERKTRTNQD) the chain is on the cytoplasmic side. Residues 298–317 (VAKLWVQGLIAVWLIVALAL) form a helical membrane-spanning segment. Residues 318 to 320 (HLA) lie on the Periplasmic side of the membrane. Residues 321–340 (AVGLIGLSVIILATAFTGVI) traverse the membrane as a helical segment. The Cytoplasmic segment spans residues 341–352 (EEHSMGKAFEEA). The chain crosses the membrane as a helical span at residues 353–375 (LPFTALLAVFFSIVAVIIDQELF). Topologically, residues 376–389 (KPVIDAVLAVEDKG) are periplasmic. A helical transmembrane segment spans residues 390-412 (TQLALFYVANGLLSMVSDNVFVG). At 413–477 (TVYINEVKTA…PLIRLSYGRM (65 aa)) the chain is on the cytoplasmic side. A helical transmembrane segment spans residues 478-500 (VIMALPYTIVLAIVGLMGIMFFL). Residues 501 to 528 (EPATASFYDAGWILPHSGDLTPVVSGGH) lie on the Periplasmic side of the membrane.

This sequence belongs to the NhaB Na(+)/H(+) (TC 2.A.34) antiporter family.

The protein resides in the cell inner membrane. The catalysed reaction is 2 Na(+)(in) + 3 H(+)(out) = 2 Na(+)(out) + 3 H(+)(in). Na(+)/H(+) antiporter that extrudes sodium in exchange for external protons. This is Na(+)/H(+) antiporter NhaB from Vibrio alginolyticus.